The chain runs to 354 residues: uncharacterized protein (354 aa).

Over residues 309–326 the composition is skewed to polar residues; that stretch reads VNSANSINTANTRSQTGG. Positions 309-333 are disordered; the sequence is VNSANSINTANTRSQTGGQDEEDFE. A coiled-coil region spans residues 326-353; sequence GQDEEDFEKKYKKYKNKYAKLKNQKTSN.

Its subcellular location is the virion. This is an uncharacterized protein from Acanthamoeba polyphaga (Amoeba).